Here is a 249-residue protein sequence, read N- to C-terminus: Putative protein SNX29P2 (249 aa).

2 disordered regions span residues 109 to 171 (QVTN…SNSW) and 188 to 249 (DVKS…PGFK). The segment covering 156–170 (SPFGPNSNGSQSSNS) has biased composition (low complexity). The span at 193–204 (DDEDVDENEDDV) shows a compositional bias: acidic residues. Polar residues predominate over residues 226 to 242 (HSVTQAGVQWHDLSSLQ).

Belongs to the sorting nexin family.

The protein is Putative protein SNX29P2 (SNX29P2) of Homo sapiens (Human).